Reading from the N-terminus, the 193-residue chain is Oligoribonuclease (193 aa).

The 164-residue stretch at F20–L183 folds into the Exonuclease domain. Y141 is an active-site residue.

It belongs to the oligoribonuclease family.

Its subcellular location is the cytoplasm. 3'-to-5' exoribonuclease specific for small oligoribonucleotides. This chain is Oligoribonuclease, found in Paracidovorax citrulli (strain AAC00-1) (Acidovorax citrulli).